A 552-amino-acid polypeptide reads, in one-letter code: Macrophage colony-stimulating factor 1 (552 aa).

The first 32 residues, 1 to 32, serve as a signal peptide directing secretion; the sequence is MTARGAAGRCPSSTWLGSRLLLVCLLMSRSIA. Topologically, residues 33 to 492 are extracellular; it reads KEVSEHCSHM…EGSSDPQIPE (460 aa). 3 cysteine pairs are disulfide-bonded: Cys39/Cys122, Cys80/Cys171, and Cys134/Cys178. N-linked (GlcNAc...) asparagine glycosylation is found at Asn107, Asn154, and Asn172. Residues 197–207 are compositionally biased toward low complexity; it reads TPSSDPASASP. Positions 197-293 are disordered; it reads TPSSDPASAS…GGPVPGVEDI (97 aa). Polar residues predominate over residues 254–267; that stretch reads PRSTCQTLESTEQP. Residues 268–278 show a composition bias toward basic and acidic residues; it reads NHGDRLTEDSQ. The O-linked (Xyl...) (chondroitin sulfate) serine glycan is linked to Ser308. Disordered regions lie at residues 321–412 and 439–465; these read KFSP…RVSN and GKRS…ARPV. Basic and acidic residues-rich tracts occupy residues 350–364, 382–396, and 439–450; these read STED…DRPL, EKTD…DHQE, and GKRSTRDRRSPA. O-linked (GalNAc...) threonine glycosylation occurs at Thr360. A helical membrane pass occupies residues 493–515; sequence SVFHLLVPGIILVLLTVGGLLFY. At 516-552 the chain is on the cytoplasmic side; the sequence is KWKWRSHRDPQTLDSSVGRPEDSSLTQDEDRQVELPV. The segment at 525–552 is disordered; that stretch reads PQTLDSSVGRPEDSSLTQDEDRQVELPV. Over residues 543–552 the composition is skewed to basic and acidic residues; the sequence is DEDRQVELPV.

Homodimer or heterodimer; disulfide-linked. Likely to exist in multiple forms: homodimer consisting of 2 identical 150-200 kDa proteoglycan subunits, heterodimer consisting of a 150-200 kDa proteoglycan subunit and a truncated 43 kDa subunit, and homodimer consisting of 2 identical 43 kDa subunits. Interacts with CSF1R. Post-translationally, N-glycosylated. In terms of processing, O-glycosylated; contains chondroitin sulfate.

The protein resides in the cell membrane. The protein localises to the secreted. It is found in the extracellular space. In terms of biological role, cytokine that plays an essential role in the regulation of survival, proliferation and differentiation of hematopoietic precursor cells, especially mononuclear phagocytes, such as macrophages and monocytes. Promotes the release of pro-inflammatory chemokines, and thereby plays an important role in innate immunity and in inflammatory processes. Plays an important role in the regulation of osteoclast proliferation and differentiation, the regulation of bone resorption, and is required for normal bone development. Required for normal male and female fertility. Promotes reorganization of the actin cytoskeleton, regulates formation of membrane ruffles, cell adhesion and cell migration. Plays a role in lipoprotein clearance. The protein is Macrophage colony-stimulating factor 1 (Csf1) of Mus musculus (Mouse).